The primary structure comprises 200 residues: uncharacterized protein (200 aa).

Residues 104-124 (SNLLICFLFLCGLYHISVFTG) form a helical membrane-spanning segment.

The protein resides in the membrane. This is an uncharacterized protein from Escherichia coli (strain K12).